A 428-amino-acid polypeptide reads, in one-letter code: 3-phosphoshikimate 1-carboxyvinyltransferase (428 aa).

Residues lysine 23, serine 24, and arginine 28 each contribute to the 3-phosphoshikimate site. Lysine 23 serves as a coordination point for phosphoenolpyruvate. Residues glycine 97 and arginine 125 each coordinate phosphoenolpyruvate. 3-phosphoshikimate is bound by residues serine 170, serine 171, glutamine 172, serine 198, aspartate 314, asparagine 337, and lysine 341. Residue glutamine 172 participates in phosphoenolpyruvate binding. The active-site Proton acceptor is aspartate 314. The phosphoenolpyruvate site is built by arginine 345, arginine 387, and lysine 412.

It belongs to the EPSP synthase family. Monomer.

Its subcellular location is the cytoplasm. The enzyme catalyses 3-phosphoshikimate + phosphoenolpyruvate = 5-O-(1-carboxyvinyl)-3-phosphoshikimate + phosphate. It functions in the pathway metabolic intermediate biosynthesis; chorismate biosynthesis; chorismate from D-erythrose 4-phosphate and phosphoenolpyruvate: step 6/7. In terms of biological role, catalyzes the transfer of the enolpyruvyl moiety of phosphoenolpyruvate (PEP) to the 5-hydroxyl of shikimate-3-phosphate (S3P) to produce enolpyruvyl shikimate-3-phosphate and inorganic phosphate. This is 3-phosphoshikimate 1-carboxyvinyltransferase from Hamiltonella defensa subsp. Acyrthosiphon pisum (strain 5AT).